Consider the following 240-residue polypeptide: Pyridoxine 5'-phosphate synthase (240 aa).

Asparagine 7 serves as a coordination point for 3-amino-2-oxopropyl phosphate. Residue 9–10 (DH) coordinates 1-deoxy-D-xylulose 5-phosphate. Arginine 18 contributes to the 3-amino-2-oxopropyl phosphate binding site. Histidine 43 functions as the Proton acceptor in the catalytic mechanism. 2 residues coordinate 1-deoxy-D-xylulose 5-phosphate: arginine 45 and histidine 50. Glutamate 70 serves as the catalytic Proton acceptor. 1-deoxy-D-xylulose 5-phosphate is bound at residue threonine 100. Histidine 191 acts as the Proton donor in catalysis. 3-amino-2-oxopropyl phosphate is bound by residues glycine 192 and 213-214 (GH).

It belongs to the PNP synthase family. In terms of assembly, homooctamer; tetramer of dimers.

It is found in the cytoplasm. The catalysed reaction is 3-amino-2-oxopropyl phosphate + 1-deoxy-D-xylulose 5-phosphate = pyridoxine 5'-phosphate + phosphate + 2 H2O + H(+). It participates in cofactor biosynthesis; pyridoxine 5'-phosphate biosynthesis; pyridoxine 5'-phosphate from D-erythrose 4-phosphate: step 5/5. Its function is as follows. Catalyzes the complicated ring closure reaction between the two acyclic compounds 1-deoxy-D-xylulose-5-phosphate (DXP) and 3-amino-2-oxopropyl phosphate (1-amino-acetone-3-phosphate or AAP) to form pyridoxine 5'-phosphate (PNP) and inorganic phosphate. The polypeptide is Pyridoxine 5'-phosphate synthase (Coxiella burnetii (strain Dugway 5J108-111)).